Consider the following 495-residue polypeptide: MDAMDLTVAKFKEFTQLQSSAILLTVVSGIIVIVILLLRSKRRSSLKLPPGKLGLPLIGESLSFLWALRSNTLEQFVDKRVKKYGNVFKTSLLGQPTVVLCGAAGNRLILSNQEKLLSRTVSDRVAKLTGDTSISVIAGDSHRIIRAAVAGFLGPAGLKIHIGEMSAHIRNHINQVWKGKDEVNVLSLARELVFAISASLFLNINDREEQHQLHKTLETILPGYFSVPINFPGFAFRKALEGNSKRRKHFSVLQEKRRRDLSVGLASRTQDLLSVLLAYEDDKGNPLTDEEVLDNISALIDGSYESTSSQMAMLLKLLSDHPECYEKVVQEQLEIASHKKEGEEITWKDVKAMRYTWQVMQETLRMFAPVFGPRGKAITDIHYDGYTIPKGWQLSWATYSTHQNDTYFNEPDKFMPSRFDEEGGRLAPYTFVPFGGGRRKCPGWEFAKTEILLFVHHFVKTFSAYTPIDPHESIWGRPLPPVPANGFPIKLISRS.

Residues 17–37 traverse the membrane as a helical segment; that stretch reads LQSSAILLTVVSGIIVIVILL. Position 441 (Cys-441) interacts with heme.

Belongs to the cytochrome P450 family.

Its subcellular location is the microsome membrane. The enzyme catalyses taxusin + reduced [NADPH--hemoprotein reductase] + O2 = 2alpha-hydroxytaxusin + oxidized [NADPH--hemoprotein reductase] + H2O + H(+). The catalysed reaction is 7beta-hydroxytaxusin + reduced [NADPH--hemoprotein reductase] + O2 = 2alpha,7beta-dihydroxytaxusin + oxidized [NADPH--hemoprotein reductase] + H2O + H(+). It participates in alkaloid biosynthesis; taxol biosynthesis. Functionally, catalyzes the conversion of taxusin to 2-alpha-hydroxytaxusin in taxol biosynthesis. Catalyzes the conversion of 7-beta-hydroxytaxusin to 2-alpha-7-beta-hydroxytaxusin in taxol biosynthesis. This Taxus canadensis (Canadian yew) protein is Taxoid 2-alpha-hydroxylase.